Here is a 509-residue protein sequence, read N- to C-terminus: NADH-quinone oxidoreductase subunit M (509 aa).

The next 13 membrane-spanning stretches (helical) occupy residues 1 to 21, 30 to 50, 87 to 107, 123 to 143, 176 to 196, 223 to 243, 261 to 281, 288 to 308, 316 to 336, 342 to 362, 376 to 396, 422 to 442, and 467 to 487; these read MILP…WIAE, WIAL…WATG, LSLL…LCSW, WILG…FFFF, FFIF…GLVF, WLLM…VPVH, LAGI…LPLF, FAPI…LLSF, LVAY…YSGS, GVVV…ILCG, MGGL…FASA, VIIV…LIMI, and VLGL…VLDI.

It belongs to the complex I subunit 4 family. In terms of assembly, composed of 13 different subunits. Subunits NuoA, H, J, K, L, M, N constitute the membrane sector of the complex.

It is found in the cell inner membrane. The catalysed reaction is a quinone + NADH + 5 H(+)(in) = a quinol + NAD(+) + 4 H(+)(out). Functionally, NDH-1 shuttles electrons from NADH, via FMN and iron-sulfur (Fe-S) centers, to quinones in the respiratory chain. The immediate electron acceptor for the enzyme in this species is believed to be ubiquinone. Couples the redox reaction to proton translocation (for every two electrons transferred, four hydrogen ions are translocated across the cytoplasmic membrane), and thus conserves the redox energy in a proton gradient. This is NADH-quinone oxidoreductase subunit M (nuoM) from Pseudomonas aeruginosa (strain ATCC 15692 / DSM 22644 / CIP 104116 / JCM 14847 / LMG 12228 / 1C / PRS 101 / PAO1).